The chain runs to 429 residues: Serine transporter SdaC (429 aa).

Residues 1–22 (METTQTSTIASKDSRSAWRKTD) lie on the Cytoplasmic side of the membrane. The chain crosses the membrane as a helical span at residues 23-43 (TMWMLGLYGTAIGAGVLFLPI). At 44–46 (NAG) the chain is on the periplasmic side. The helical transmembrane segment at 47-67 (VGGMIPLIIMAILAFPMTFFA) threads the bilayer. Residues 68–99 (HRGLTRFVLSGKNPGEDITEVVEEHFGIGAGK) are Cytoplasmic-facing. A helical transmembrane segment spans residues 100–120 (LITLLYFFAIYPILLVYSVAI). The Periplasmic segment spans residues 121–140 (TNTVESFMSHQLGMTPPPRA). Residues 141-161 (ILSLILIVGMMTIVRFGEQMI) traverse the membrane as a helical segment. Over 162 to 163 (VK) the chain is Cytoplasmic. Residues 164 to 184 (AMSILVFPFVGVLMLLALYLI) traverse the membrane as a helical segment. At 185-201 (PQWNGAALETLSLDTAS) the chain is on the periplasmic side. The helical transmembrane segment at 202–222 (ATGNGLWMTLWLAIPVMVFSF) threads the bilayer. At 223 to 249 (NHSPIISSFAVAKREEYGDMAEQKCSK) the chain is on the cytoplasmic side. Residues 250-270 (ILAFAHIMMVLTVMFFVFSCV) form a helical membrane-spanning segment. At 271–297 (LSLTPADLAAAKEQNISILSYLANHFN) the chain is on the periplasmic side. The chain crosses the membrane as a helical span at residues 298 to 318 (APVIAWMAPIIAIIAITKSFL). The Cytoplasmic segment spans residues 319-347 (GHYLGAREGFNGMVIKSLRGKGKSIEINK). The helical transmembrane segment at 348–368 (LNRITALFMLVTTWIVATLNP) threads the bilayer. Position 369 (Ser369) is a topological domain, periplasmic. The helical transmembrane segment at 370–390 (ILGMIETLGGPIIAMILFLMP) threads the bilayer. Over 391-406 (MYAIQKVPAMRKYSGH) the chain is Cytoplasmic. A helical transmembrane segment spans residues 407-427 (ISNVFVVVMGLIAISAIFYSL). Residues 428–429 (FS) are Periplasmic-facing.

This sequence belongs to the amino acid/polyamine transporter 2 family. SdaC/TdcC subfamily.

The protein resides in the cell inner membrane. It catalyses the reaction L-serine(in) + H(+)(in) = L-serine(out) + H(+)(out). Its function is as follows. Mediates the import of L-serine into the cell. Is energized by proton cotransport. In Escherichia coli O157:H7, this protein is Serine transporter SdaC (sdaC).